Here is a 389-residue protein sequence, read N- to C-terminus: MEKAIRNFLSQESAGGILLLIAVAFAMLMANSPLAGFYQGFLGTEVQVRVGALDLHKPLLLWINDGLMALFFLLIGLEVKRELLEGALSSVAQASLPTFAAIGGMLVPAGIYLLFNYGDPITQAGWAIPAATDIAFALGIMALLGSRVPVALKVFLLALAIIDDLGVIVIIALFYSSDLSTVSLIIASIAIVGLVALNRKGVTSLAPYGVLGLILWVAVLKSGVHATLAGVIIAFCIPLRAKDGSSPSEHLEHSLHPWSTFLILPVFAFANAGVALGNMSLDTLMSPVPVGIALGLMLGKPIGVMLFSFVAVKLKLAQLPDGIGWKQIAPVAAMCGIGFTMSMFIASLAFEQADPMFGDLARLGTLMGSIFAALIGYFWLSKVLPKKGV.

11 helical membrane passes run 17 to 37 (ILLLIAVAFAMLMANSPLAGF), 59 to 79 (LLLWINDGLMALFFLLIGLEV), 95 to 115 (SLPTFAAIGGMLVPAGIYLLF), 124 to 144 (AGWAIPAATDIAFALGIMALL), 154 to 174 (VFLLALAIIDDLGVIVIIALF), 177 to 197 (SDLSTVSLIIASIAIVGLVAL), 213 to 233 (LILWVAVLKSGVHATLAGVII), 261 to 281 (FLILPVFAFANAGVALGNMSL), 292 to 312 (IALGLMLGKPIGVMLFSFVAV), 328 to 348 (IAPVAAMCGIGFTMSMFIASL), and 363 to 383 (LGTLMGSIFAALIGYFWLSKV).

It belongs to the NhaA Na(+)/H(+) (TC 2.A.33) antiporter family.

It is found in the cell inner membrane. It carries out the reaction Na(+)(in) + 2 H(+)(out) = Na(+)(out) + 2 H(+)(in). Na(+)/H(+) antiporter that extrudes sodium in exchange for external protons. In Shewanella oneidensis (strain ATCC 700550 / JCM 31522 / CIP 106686 / LMG 19005 / NCIMB 14063 / MR-1), this protein is Na(+)/H(+) antiporter NhaA.